We begin with the raw amino-acid sequence, 166 residues long: MSKVLEQKQQVVAEVAAKLRDSKSTVIVDYRGLNVAQVTELRKQLREAGVEYKVYKNTLVRRATAEAGLTGLDEHLVGPTAIAFGVDDVIAPAKVLNEFAKNNEALTIKTGVIEGNISTADEVKALAELPSREGLLSMLANVLQAPVRQFALAAKAVAEQKEEQGA.

It belongs to the universal ribosomal protein uL10 family. As to quaternary structure, part of the ribosomal stalk of the 50S ribosomal subunit. The N-terminus interacts with L11 and the large rRNA to form the base of the stalk. The C-terminus forms an elongated spine to which L12 dimers bind in a sequential fashion forming a multimeric L10(L12)X complex.

Forms part of the ribosomal stalk, playing a central role in the interaction of the ribosome with GTP-bound translation factors. This is Large ribosomal subunit protein uL10 from Shouchella clausii (strain KSM-K16) (Alkalihalobacillus clausii).